A 357-amino-acid chain; its full sequence is sn-glycerol-3-phosphate import ATP-binding protein UgpC (357 aa).

The 232-residue stretch at 4 to 235 folds into the ABC transporter domain; that stretch reads LKLQAVTKSY…PASLFVASFI (232 aa). Position 37–44 (37–44) interacts with ATP; sequence GPSGCGKS.

It belongs to the ABC transporter superfamily. sn-glycerol-3-phosphate importer (TC 3.A.1.1.3) family. As to quaternary structure, the complex is composed of two ATP-binding proteins (UgpC), two transmembrane proteins (UgpA and UgpE) and a solute-binding protein (UgpB).

It localises to the cell inner membrane. The enzyme catalyses sn-glycerol 3-phosphate(out) + ATP + H2O = sn-glycerol 3-phosphate(in) + ADP + phosphate + H(+). Part of the ABC transporter complex UgpBAEC involved in sn-glycerol-3-phosphate (G3P) import. Responsible for energy coupling to the transport system. This is sn-glycerol-3-phosphate import ATP-binding protein UgpC from Yersinia pseudotuberculosis serotype I (strain IP32953).